A 444-amino-acid polypeptide reads, in one-letter code: Vacuolar protein sorting-associated protein 4B (444 aa).

In terms of domain architecture, MIT spans 4–82 (TNTNLQKAID…KEYLKKKEKK (79 aa)). A coiled-coil region spans residues 19 to 82 (AQEDKAGNYE…KEYLKKKEKK (64 aa)). The tract at residues 77–118 (KKKEKKPQKPVKEEQSGPVDEKGNDSDGEAESDDPEKKKLQN) is disordered. Over residues 86–101 (PVKEEQSGPVDEKGND) the composition is skewed to basic and acidic residues. 2 positions are modified to phosphoserine: S102 and S108. An ATP-binding site is contributed by 174–181 (GPPGTGKS). S410 bears the Phosphoserine mark.

This sequence belongs to the AAA ATPase family. In terms of assembly, proposed to be monomeric or homodimeric in nucleotide-free form and to oligomerize upon binding to ATP to form two stacked hexameric or heptameric rings with a central pore through which ESCRT-III substrates are translocated in an ATP-dependent manner. In vitro, associates on the inside of a helical tubular structure formed by a CHMP2A-CHMP3 polymer. Interacts with CHMP1A, CHMP1B, CHMP4B and CHMP6. Interacts with CHMP2A. Interacts with VPS4A; the interaction suggests a heteromeric assembly with VPS4A. Interacts with VTA1. In terms of tissue distribution, high level expression seen in the kidney. It is also expressed in the heart, brain, spleen, lung, liver, skeletal muscle, and testis.

It is found in the late endosome membrane. The catalysed reaction is ATP + H2O = ADP + phosphate + H(+). Functionally, involved in late steps of the endosomal multivesicular bodies (MVB) pathway. Recognizes membrane-associated ESCRT-III assemblies and catalyzes their disassembly, possibly in combination with membrane fission. Redistributes the ESCRT-III components to the cytoplasm for further rounds of MVB sorting. MVBs contain intraluminal vesicles (ILVs) that are generated by invagination and scission from the limiting membrane of the endosome and mostly are delivered to lysosomes enabling degradation of membrane proteins, such as stimulated growth factor receptors, lysosomal enzymes and lipids. VPS4A/B are required for the exosomal release of SDCBP, CD63 and syndecan. Its function is as follows. (Microbial infection) In conjunction with the ESCRT machinery also appears to function in topologically equivalent membrane fission events, such as the terminal stages of cytokinesis and enveloped virus budding (lentiviruses). This is Vacuolar protein sorting-associated protein 4B from Mus musculus (Mouse).